The primary structure comprises 65 residues: Large ribosomal subunit protein bL33c (65 aa).

This sequence belongs to the bacterial ribosomal protein bL33 family.

It is found in the plastid. The protein resides in the chloroplast. The protein is Large ribosomal subunit protein bL33c (rpl33) of Marchantia polymorpha (Common liverwort).